Consider the following 82-residue polypeptide: Ice-structuring protein B (82 aa).

The N-terminal stretch at 1–23 is a signal peptide; the sequence is MALSLFTVGQLIFLFWTMRITEA. Residues 24–44 constitute a propeptide, removed by a dipeptidylpeptidase; it reads RPDPAAKAAPAAAAVPAAAAP. At R81 the chain carries Arginine amide.

Belongs to the type-I AFP family. Post-translationally, amidated. As to expression, detected in liver (at protein level).

The protein resides in the secreted. It is found in the extracellular space. Functionally, contributes to protect fish blood from freezing at subzero sea water temperatures. Lowers the blood freezing point. Binds to nascent ice crystals and prevents further growth. The polypeptide is Ice-structuring protein B (Pseudopleuronectes americanus (Winter flounder)).